The primary structure comprises 450 residues: Bifunctional protein GlmU (450 aa).

Residues 1–229 (MRRHAIILAA…VEEIMGVNDR (229 aa)) form a pyrophosphorylase region. UDP-N-acetyl-alpha-D-glucosamine is bound by residues 8-11 (LAAG), Lys-22, Gln-72, and 77-78 (GT). Residue Asp-102 participates in Mg(2+) binding. Residues Gly-139, Glu-154, and Asn-227 each contribute to the UDP-N-acetyl-alpha-D-glucosamine site. Asn-227 contributes to the Mg(2+) binding site. The interval 230–250 (VMLSQAEKAMQRRTNHYHMLN) is linker. Residues 251 to 450 (GVTIIDPDST…RQTTKEGYRK (200 aa)) form an N-acetyltransferase region. Residues Arg-332 and Lys-350 each contribute to the UDP-N-acetyl-alpha-D-glucosamine site. The Proton acceptor role is filled by His-362. UDP-N-acetyl-alpha-D-glucosamine contacts are provided by Tyr-365 and Asn-376. Acetyl-CoA-binding positions include 385 to 386 (NY), Ala-422, and Arg-439.

In the N-terminal section; belongs to the N-acetylglucosamine-1-phosphate uridyltransferase family. The protein in the C-terminal section; belongs to the transferase hexapeptide repeat family. In terms of assembly, homotrimer. Mg(2+) serves as cofactor.

Its subcellular location is the cytoplasm. The enzyme catalyses alpha-D-glucosamine 1-phosphate + acetyl-CoA = N-acetyl-alpha-D-glucosamine 1-phosphate + CoA + H(+). The catalysed reaction is N-acetyl-alpha-D-glucosamine 1-phosphate + UTP + H(+) = UDP-N-acetyl-alpha-D-glucosamine + diphosphate. It functions in the pathway nucleotide-sugar biosynthesis; UDP-N-acetyl-alpha-D-glucosamine biosynthesis; N-acetyl-alpha-D-glucosamine 1-phosphate from alpha-D-glucosamine 6-phosphate (route II): step 2/2. It participates in nucleotide-sugar biosynthesis; UDP-N-acetyl-alpha-D-glucosamine biosynthesis; UDP-N-acetyl-alpha-D-glucosamine from N-acetyl-alpha-D-glucosamine 1-phosphate: step 1/1. Its pathway is bacterial outer membrane biogenesis; LPS lipid A biosynthesis. Its function is as follows. Catalyzes the last two sequential reactions in the de novo biosynthetic pathway for UDP-N-acetylglucosamine (UDP-GlcNAc). The C-terminal domain catalyzes the transfer of acetyl group from acetyl coenzyme A to glucosamine-1-phosphate (GlcN-1-P) to produce N-acetylglucosamine-1-phosphate (GlcNAc-1-P), which is converted into UDP-GlcNAc by the transfer of uridine 5-monophosphate (from uridine 5-triphosphate), a reaction catalyzed by the N-terminal domain. The chain is Bifunctional protein GlmU from Staphylococcus aureus (strain NCTC 8325 / PS 47).